A 233-amino-acid polypeptide reads, in one-letter code: Probable RNA 2'-phosphotransferase (233 aa).

Belongs to the KptA/TPT1 family.

Removes the 2'-phosphate from RNA via an intermediate in which the phosphate is ADP-ribosylated by NAD followed by a presumed transesterification to release the RNA and generate ADP-ribose 1''-2''-cyclic phosphate (APPR&gt;P). May function as an ADP-ribosylase. In Hyperthermus butylicus (strain DSM 5456 / JCM 9403 / PLM1-5), this protein is Probable RNA 2'-phosphotransferase.